A 1070-amino-acid polypeptide reads, in one-letter code: DNA-directed RNA polymerase subunit beta (1070 aa).

This sequence belongs to the RNA polymerase beta chain family. As to quaternary structure, in plastids the minimal PEP RNA polymerase catalytic core is composed of four subunits: alpha, beta, beta', and beta''. When a (nuclear-encoded) sigma factor is associated with the core the holoenzyme is formed, which can initiate transcription.

Its subcellular location is the plastid. The protein localises to the chloroplast. The enzyme catalyses RNA(n) + a ribonucleoside 5'-triphosphate = RNA(n+1) + diphosphate. In terms of biological role, DNA-dependent RNA polymerase catalyzes the transcription of DNA into RNA using the four ribonucleoside triphosphates as substrates. This Lotus japonicus (Lotus corniculatus var. japonicus) protein is DNA-directed RNA polymerase subunit beta.